A 1217-amino-acid chain; its full sequence is ATP-dependent helicase/nuclease subunit A (1217 aa).

In terms of domain architecture, UvrD-like helicase ATP-binding spans 10–475 (VIWTDAQWQS…MDLSQNFRSR (466 aa)). 31–38 (AAAGSGKT) is an ATP binding site. Positions 491 to 786 (DEQVGEVNYD…RMMTIHSSKG (296 aa)) constitute a UvrD-like helicase C-terminal domain.

This sequence belongs to the helicase family. AddA subfamily. As to quaternary structure, heterodimer of AddA and AddB/RexB. The cofactor is Mg(2+).

It catalyses the reaction Couples ATP hydrolysis with the unwinding of duplex DNA by translocating in the 3'-5' direction.. It carries out the reaction ATP + H2O = ADP + phosphate + H(+). In terms of biological role, the heterodimer acts as both an ATP-dependent DNA helicase and an ATP-dependent, dual-direction single-stranded exonuclease. Recognizes the chi site generating a DNA molecule suitable for the initiation of homologous recombination. The AddA nuclease domain is required for chi fragment generation; this subunit has the helicase and 3' -&gt; 5' nuclease activities. The chain is ATP-dependent helicase/nuclease subunit A from Staphylococcus aureus (strain bovine RF122 / ET3-1).